Here is a 500-residue protein sequence, read N- to C-terminus: Na(+)/H(+) antiporter NhaB (500 aa).

A run of 11 helical transmembrane segments spans residues F13–P33, I34–F54, C62–S82, I97–I117, I129–L149, F242–I262, G306–V326, F350–I370, P392–A412, V449–L469, and M477–T497.

This sequence belongs to the NhaB Na(+)/H(+) (TC 2.A.34) antiporter family.

It is found in the cell inner membrane. The catalysed reaction is 2 Na(+)(in) + 3 H(+)(out) = 2 Na(+)(out) + 3 H(+)(in). Its function is as follows. Na(+)/H(+) antiporter that extrudes sodium in exchange for external protons. The polypeptide is Na(+)/H(+) antiporter NhaB (Marinomonas sp. (strain MWYL1)).